The primary structure comprises 769 residues: MATEGMILTNHDHQIRVGVLTVSDSCFRNLAEDRSGINLKDLVQDPSLLGGTISAYKIVPDEIEEIKETLIDWCDEKELNLILTTGGTGFAPRDVTPEATKEVIEREAPGMALAMLMGSLNVTPLGMLSRPVCGIRGKTLIINLPGSKKGSQECFQFILPALPHAIDLLRDAIVKVKEVHDELEDLPSPPPPLSPPPTTSPHKQTEDKGVQCEEEEEEKKDSGVASTEDSSSSHITAAALAAKIPDSIISRGVQVLPRDTASLSTTPSESPRAQATSRLSTASCPTPKQIRRPDESKGVASRVGSLKARLPSCSSTYSVSEVQSRCSSKENILRASHSAVDITKVARRHRMSPFPLTSMDKAFITVLEMTPVLGTEIINYRDGMGRVLAQDVYAKDNLPPFPASVKDGYAVRAADGPGDRFIIGESQAGEQPTQTVMPGQVMRVTTGAPIPCGADAVVQVEDTELIRESDDGTEELEVRILVQARPGQDIRPIGHDIKRGECVLAKGTHMGPSEIGLLATVGVTEVEVNKFPVVAVMSTGNELLNPEDDLLPGKIRDSNRSTLLATIQEHGYPTINLGIVGDNPDDLLNALNEGISRADVIITSGGVSMGEKDYLKQVLDIDLHAQIHFGRVFMKPGLPTTFATLDIDGVRKIIFALPGNPVSAVVTCNLFVVPALRKMQGILDPRPTIIKARLSCDVKLDPRPEYHRCILTWHHQEPLPWAQSTGNQMSSRLMSMRSANGLLMLPPKTEQYVELHKGEVVDVMVIGRL.

The interval 14 to 153 is MPT Mo-transferase; the sequence is QIRVGVLTVS…LPGSKKGSQE (140 aa). Residues 140–349 are interaction with GABARAP; the sequence is LIINLPGSKK…VDITKVARRH (210 aa). 2 disordered regions span residues 181 to 232 and 260 to 299; these read DELE…DSSS and TASLSTTPSESPRAQATSRLSTASCPTPKQIRRPDESKGV. The segment covering 187–199 has biased composition (pro residues); it reads PSPPPPLSPPPTT. Ser188 and Ser194 each carry phosphoserine. At Thr198 the chain carries Phosphothreonine. Ser200 is modified (phosphoserine). Cys212 carries S-palmitoyl cysteine lipidation. A compositionally biased stretch (polar residues) spans 261-286; sequence ASLSTTPSESPRAQATSRLSTASCPT. At Ser262 the chain carries Phosphoserine. Phosphothreonine is present on residues Thr265 and Thr266. Residues Ser268 and Ser270 each carry the phosphoserine modification. Cys284 carries S-palmitoyl cysteine lipidation. The interval 327–769 is MPT adenylyltransferase; sequence SSKENILRAS…VVDVMVIGRL (443 aa). A Phosphoserine modification is found at Ser338.

In the N-terminal section; belongs to the MoaB/Mog family. It in the C-terminal section; belongs to the MoeA family. Homotrimer, homodimer and homooligomer. Interacts with SRGAP2 (via SH3 domain). Interacts with GLRB. Interacts with GABARAP. Interacts with GABRA3. GABRA3 and GLRB occupy overlapping binding sites. Interacts with ARHGAP32; IQSEC3, INSYN1 and INSYN2A. Requires Mg(2+) as cofactor. Palmitoylated. Palmitoylation is stimulated by GABA type A receptors activity. Palmitoylation by ZDHHC12 regulates clustering at synapses.

It is found in the postsynaptic cell membrane. The protein resides in the cell membrane. Its subcellular location is the cytoplasm. It localises to the cytosol. The protein localises to the cytoskeleton. It is found in the cell projection. The protein resides in the dendrite. Its subcellular location is the postsynaptic density. It catalyses the reaction molybdopterin + ATP + H(+) = adenylyl-molybdopterin + diphosphate. It carries out the reaction adenylyl-molybdopterin + molybdate = Mo-molybdopterin + AMP + H(+). Its pathway is cofactor biosynthesis; molybdopterin biosynthesis. Its activity is regulated as follows. Inhibited by copper and tungsten. Microtubule-associated protein involved in membrane protein-cytoskeleton interactions. It is thought to anchor the inhibitory glycine receptor (GLYR) to subsynaptic microtubules. Acts as a major instructive molecule at inhibitory synapses, where it also clusters GABA type A receptors. In terms of biological role, also has a catalytic activity and catalyzes two steps in the biosynthesis of the molybdenum cofactor. In the first step, molybdopterin is adenylated. Subsequently, molybdate is inserted into adenylated molybdopterin and AMP is released. The polypeptide is Gephyrin (Gphn) (Mus musculus (Mouse)).